The chain runs to 280 residues: Undecaprenyl-diphosphatase (280 aa).

The next 8 helical transmembrane spans lie at 19–39 (FLPV…PFSG), 44–64 (FDDL…LFLY), 89–109 (FYFL…GFIA), 125–145 (ILAS…WFFQ), 156–176 (VGFR…IPGV), 197–217 (AEFS…YKLI), 226–246 (VTIP…TLVI), and 259–279 (GVFG…TKFI).

This sequence belongs to the UppP family.

It localises to the cell inner membrane. It catalyses the reaction di-trans,octa-cis-undecaprenyl diphosphate + H2O = di-trans,octa-cis-undecaprenyl phosphate + phosphate + H(+). Functionally, catalyzes the dephosphorylation of undecaprenyl diphosphate (UPP). Confers resistance to bacitracin. The polypeptide is Undecaprenyl-diphosphatase (Leptospira borgpetersenii serovar Hardjo-bovis (strain L550)).